Consider the following 78-residue polypeptide: Sec-independent protein translocase protein TatA (78 aa).

A helical transmembrane segment spans residues 1-21 (MGSLSIWHWIVVIGVVLLLFG). Residues 42–60 (GLQDDEKTAEKPEPVKSID) are compositionally biased toward basic and acidic residues. Residues 42–78 (GLQDDEKTAEKPEPVKSIDHTAPPAAAPRTDVGSKVV) are disordered.

The protein belongs to the TatA/E family. As to quaternary structure, the Tat system comprises two distinct complexes: a TatABC complex, containing multiple copies of TatA, TatB and TatC subunits, and a separate TatA complex, containing only TatA subunits. Substrates initially bind to the TatABC complex, which probably triggers association of the separate TatA complex to form the active translocon.

It localises to the cell inner membrane. Its function is as follows. Part of the twin-arginine translocation (Tat) system that transports large folded proteins containing a characteristic twin-arginine motif in their signal peptide across membranes. TatA could form the protein-conducting channel of the Tat system. The protein is Sec-independent protein translocase protein TatA of Rhodopseudomonas palustris (strain BisB18).